We begin with the raw amino-acid sequence, 255 residues long: Pimeloyl-[acyl-carrier protein] methyl ester esterase (255 aa).

In terms of domain architecture, AB hydrolase-1 spans 16–242; that stretch reads LVLLHGWGLN…AAHAPFISHP (227 aa). Substrate-binding positions include Trp22, 82 to 83, and 143 to 147; these read SL and FLALQ. Ser82 acts as the Nucleophile in catalysis. Catalysis depends on residues Asp207 and His235. Position 235 (His235) interacts with substrate.

This sequence belongs to the AB hydrolase superfamily. Carboxylesterase BioH family. As to quaternary structure, monomer.

It is found in the cytoplasm. The enzyme catalyses 6-carboxyhexanoyl-[ACP] methyl ester + H2O = 6-carboxyhexanoyl-[ACP] + methanol + H(+). Its pathway is cofactor biosynthesis; biotin biosynthesis. Functionally, the physiological role of BioH is to remove the methyl group introduced by BioC when the pimeloyl moiety is complete. It allows to synthesize pimeloyl-ACP via the fatty acid synthetic pathway through the hydrolysis of the ester bonds of pimeloyl-ACP esters. The protein is Pimeloyl-[acyl-carrier protein] methyl ester esterase of Pectobacterium carotovorum subsp. carotovorum (strain PC1).